Reading from the N-terminus, the 683-residue chain is U4/U6 small nuclear ribonucleoprotein Prp3 (683 aa).

Residues 1-87 (MALSKRELDE…HSKSSSDRSR (87 aa)) form the PWI domain. Over residues 73–107 (GRSSRHSKSSSDRSRKRELKEVFGDDSEISKESSG) the composition is skewed to basic and acidic residues. The interval 73–135 (GRSSRHSKSS…IPGPPSESPG (63 aa)) is disordered. Lysine 139 is covalently cross-linked (Glycyl lysine isopeptide (Lys-Gly) (interchain with G-Cter in SUMO2)). The segment at 153–183 (IEERKKQLSFISPPTPQPKTPSSSQPERLPI) is disordered. Position 164 is a phosphoserine (serine 164). A Phosphothreonine modification is found at threonine 167. Glycyl lysine isopeptide (Lys-Gly) (interchain with G-Cter in SUMO2) cross-links involve residues lysine 244 and lysine 252. The segment at 416-550 (NLVEHPAQLN…VHISVYRVRN (135 aa)) is mediates interaction with SART3. The residue at position 619 (serine 619) is a Phosphoserine.

Component of the precatalytic spliceosome (spliceosome B complex). Component of the U4/U6-U5 tri-snRNP complex, a building block of the precatalytic spliceosome (spliceosome B complex). The U4/U6-U5 tri-snRNP complex is composed of the U4, U6 and U5 snRNAs and at least PRPF3, PRPF4, PRPF6, PRPF8, PRPF31, SNRNP200, TXNL4A, SNRNP40, SNRPB, SNRPD1, SNRPD2, SNRPD3, SNRPE, SNRPF, SNRPG, DDX23, CD2BP2, PPIH, SNU13, EFTUD2, SART1 and USP39, plus LSM2, LSM3, LSM4, LSM5, LSM6, LSM7 and LSM8. Interacts directly with PRPF4. Part of a heteromeric complex containing PPIH, PRPF3 and PRPF4 that is stable in the absence of RNA. Interacts with SART3; the interaction is direct and recruits the deubiquitinase USP4 to PRPF3. Interacts with PRPF19. Interacts ('Lys-63'-linked polyubiquitinated) with PRPF8 (via the MPN (JAB/Mov34) domain); may stabilize the U4/U6-U5 tri-snRNP complex. Interacts with ERCC6. Post-translationally, ubiquitinated. Undergoes 'Lys-63'-linked polyubiquitination by PRPF19 and deubiquitination by USP4. 'Lys-63'-linked ubiquitination increases the affinity for PRPF8 and may regulate the assembly of the U4/U6-U5 tri-snRNP complex. In terms of tissue distribution, highly expressed in retina, liver, kidney and blood. Detected at lower levels in heart and brain.

Its subcellular location is the nucleus. The protein localises to the nucleus speckle. Plays a role in pre-mRNA splicing as component of the U4/U6-U5 tri-snRNP complex that is involved in spliceosome assembly, and as component of the precatalytic spliceosome (spliceosome B complex). The sequence is that of U4/U6 small nuclear ribonucleoprotein Prp3 (PRPF3) from Homo sapiens (Human).